The chain runs to 417 residues: NADH-quinone oxidoreductase subunit D (417 aa).

It belongs to the complex I 49 kDa subunit family. As to quaternary structure, NDH-1 is composed of 14 different subunits. Subunits NuoB, C, D, E, F, and G constitute the peripheral sector of the complex.

The protein localises to the cell inner membrane. The enzyme catalyses a quinone + NADH + 5 H(+)(in) = a quinol + NAD(+) + 4 H(+)(out). In terms of biological role, NDH-1 shuttles electrons from NADH, via FMN and iron-sulfur (Fe-S) centers, to quinones in the respiratory chain. The immediate electron acceptor for the enzyme in this species is believed to be ubiquinone. Couples the redox reaction to proton translocation (for every two electrons transferred, four hydrogen ions are translocated across the cytoplasmic membrane), and thus conserves the redox energy in a proton gradient. The protein is NADH-quinone oxidoreductase subunit D of Burkholderia cenocepacia (strain HI2424).